The sequence spans 561 residues: Arginine--tRNA ligase (561 aa).

Residues 128-138 (ANPTGPLHVGH) carry the 'HIGH' region motif.

This sequence belongs to the class-I aminoacyl-tRNA synthetase family. In terms of assembly, monomer.

The protein localises to the cytoplasm. The catalysed reaction is tRNA(Arg) + L-arginine + ATP = L-arginyl-tRNA(Arg) + AMP + diphosphate. In Leptothrix cholodnii (strain ATCC 51168 / LMG 8142 / SP-6) (Leptothrix discophora (strain SP-6)), this protein is Arginine--tRNA ligase.